We begin with the raw amino-acid sequence, 157 residues long: Protein Smg homolog (157 aa).

This sequence belongs to the Smg family.

This chain is Protein Smg homolog, found in Photobacterium profundum (strain SS9).